Consider the following 229-residue polypeptide: Putative N-acetylmannosamine-6-phosphate 2-epimerase (229 aa).

Belongs to the NanE family.

It catalyses the reaction an N-acyl-D-glucosamine 6-phosphate = an N-acyl-D-mannosamine 6-phosphate. It participates in amino-sugar metabolism; N-acetylneuraminate degradation; D-fructose 6-phosphate from N-acetylneuraminate: step 3/5. Functionally, converts N-acetylmannosamine-6-phosphate (ManNAc-6-P) to N-acetylglucosamine-6-phosphate (GlcNAc-6-P). This chain is Putative N-acetylmannosamine-6-phosphate 2-epimerase, found in Actinobacillus pleuropneumoniae serotype 3 (strain JL03).